The sequence spans 456 residues: MENELFMNAGVSHPPVMTSPSSSSAMLKWVSMETQPVDPSLSRNLFWEKSTEQSIFDSALSSLVSSPTPSNSNFSVGGVGGENVIMRELIGKLGNIGDIYGITASNGNSCYATPMSSPPPGSMMETKTTTPMAELSGDPGFAERAARFSCFGSRSFNSRTNSPFPINNEPPITTNEKMPRVSSSPVFKPLASHVPAGESSGELSRKRKTKSKQNSPSAVSSSKEIEEKEDSDPKRCKKSEENGDKTKSIDPYKDYIHVRARRGQATDSHSLAERVRREKISERMKLLQDLVPGCNKVTGKALMLDEIINYVQSLQRQVEFLSMKLSSVNTRLDFNMDALLSKDIFPSSNNLMHHQQVLQLDSSAETLLGDHHNKNLQLNPDISSNNVINPLETSETRSFISHLPTLAHFTDSISQYSTFSEDDLHSIIHMGFAQNRLQELNQGSSNQVPSHMKAEL.

Polar residues predominate over residues arginine 159–proline 185. Residues arginine 159–aspartate 254 are disordered. Over residues lysine 223–aspartate 254 the composition is skewed to basic and acidic residues. The bHLH domain maps to glutamine 264–leucine 314.

In terms of assembly, homodimer. In terms of tissue distribution, expressed constitutively in roots, leaves, stems, and flowers.

The protein resides in the nucleus. The chain is Transcription factor bHLH62 (BHLH62) from Arabidopsis thaliana (Mouse-ear cress).